The sequence spans 264 residues: uncharacterized protein (264 aa).

The interval 57-264 is disordered; the sequence is RPPASPCPPR…VYPHPHLTAT (208 aa). The segment covering 140–153 has biased composition (basic residues); it reads GKARRSPGRRRHPH. Over residues 154-165 the composition is skewed to low complexity; that stretch reads SSFPQASSPSSP.

This is an uncharacterized protein from Homo sapiens (Human).